The primary structure comprises 29 residues: Cytochrome b6-f complex subunit 8 (29 aa).

Residues 3–23 (IVSIGWAALMVVFTFSLSLVV) form a helical membrane-spanning segment.

Belongs to the PetN family. In terms of assembly, the 4 large subunits of the cytochrome b6-f complex are cytochrome b6, subunit IV (17 kDa polypeptide, PetD), cytochrome f and the Rieske protein, while the 4 small subunits are PetG, PetL, PetM and PetN. The complex functions as a dimer.

The protein localises to the plastid. It localises to the chloroplast thylakoid membrane. Functionally, component of the cytochrome b6-f complex, which mediates electron transfer between photosystem II (PSII) and photosystem I (PSI), cyclic electron flow around PSI, and state transitions. The chain is Cytochrome b6-f complex subunit 8 from Zygnema circumcarinatum (Green alga).